A 365-amino-acid polypeptide reads, in one-letter code: DNA replication and repair protein RecF (365 aa).

30-37 (GANGQGKT) contacts ATP.

The protein belongs to the RecF family.

It localises to the cytoplasm. Functionally, the RecF protein is involved in DNA metabolism; it is required for DNA replication and normal SOS inducibility. RecF binds preferentially to single-stranded, linear DNA. It also seems to bind ATP. This is DNA replication and repair protein RecF from Geobacter metallireducens (strain ATCC 53774 / DSM 7210 / GS-15).